The sequence spans 318 residues: WRKY transcription factor 28 (318 aa).

2 stretches are compositionally biased toward polar residues: residues 74–84 (SSEVFNSSIDQ) and 106–115 (RVSPSNSSSS). The interval 74-158 (SSEVFNSSID…KTEVKKQREP (85 aa)) is disordered. 2 stretches are compositionally biased toward basic and acidic residues: residues 116–126 (EADHPGEDSGK) and 148–158 (KKTEVKKQREP). The WRKY DNA-binding region spans 166-231 (SEVDHLEDGY…YEGQHNHPIP (66 aa)).

The protein belongs to the WRKY group II-c family.

Its subcellular location is the nucleus. In terms of biological role, transcription factor. Interacts specifically with the W box (5'-(T)TGAC[CT]-3'), a frequently occurring elicitor-responsive cis-acting element. The protein is WRKY transcription factor 28 (WRKY28) of Arabidopsis thaliana (Mouse-ear cress).